Consider the following 1878-residue polypeptide: DNA polymerase (1878 aa).

2 disordered regions span residues 691–727 and 1839–1878; these read LFQADDDDDDDDEDEDDGLLDERQQDSAEDMKKKGPN and TQDDVVKKKRAPKRAAIDRKSGSGGKKSKITAGKTAGTMF. Acidic residues predominate over residues 694 to 709; sequence ADDDDDDDDEDEDDGL. The span at 710 to 723 shows a compositional bias: basic and acidic residues; it reads LDERQQDSAEDMKK. Low complexity predominate over residues 1868–1878; that stretch reads ITAGKTAGTMF.

This sequence belongs to the DNA polymerase type-B family.

The enzyme catalyses DNA(n) + a 2'-deoxyribonucleoside 5'-triphosphate = DNA(n+1) + diphosphate. In Magallana gigas (Pacific oyster), this protein is DNA polymerase.